Consider the following 100-residue polypeptide: High mobility group protein C (100 aa).

Positions 12-80 form a DNA-binding region, HMG box; it reads PKRPLSAFFL…KYEKDMQAYE (69 aa). The tract at residues 81-100 is disordered; sequence KKYGKPEKQKKIKKNKKGSK. A compositionally biased stretch (basic residues) spans 90–100; it reads KKIKKNKKGSK.

The protein resides in the nucleus. It is found in the chromosome. This Tetrahymena thermophila protein is High mobility group protein C.